A 372-amino-acid polypeptide reads, in one-letter code: Cuticle collagen dpy-10 (372 aa).

The first 45 residues, methionine 1 to alanine 45, serve as a signal peptide directing secretion. Triple-helical region stretches follow at residues glycine 144–threonine 173, glycine 195–threonine 251, and glycine 259–cysteine 324. The segment at glycine 144–lysine 372 is disordered. Pro residues predominate over residues glutamate 185 to proline 196. Residues proline 197–aspartate 208 show a composition bias toward low complexity. 2 stretches are compositionally biased toward gly residues: residues glycine 237–glycine 246 and glycine 283–glycine 292. A compositionally biased stretch (low complexity) spans tryptophan 293–proline 303. Over residues glycine 353–arginine 363 the composition is skewed to gly residues.

The protein belongs to the cuticular collagen family. In terms of assembly, collagen polypeptide chains are complexed within the cuticle by disulfide bonds and other types of covalent cross-links.

Its function is as follows. Nematode cuticles are composed largely of collagen-like proteins. The cuticle functions both as an exoskeleton and as a barrier to protect the worm from its environment. This chain is Cuticle collagen dpy-10 (dpy-10), found in Caenorhabditis elegans.